The chain runs to 190 residues: Molybdenum cofactor guanylyltransferase (190 aa).

GTP is bound by residues 10–12 (LAG), K23, N51, D69, and D99. A Mg(2+)-binding site is contributed by D99.

This sequence belongs to the MobA family. In terms of assembly, monomer. The cofactor is Mg(2+).

The protein resides in the cytoplasm. It catalyses the reaction Mo-molybdopterin + GTP + H(+) = Mo-molybdopterin guanine dinucleotide + diphosphate. Transfers a GMP moiety from GTP to Mo-molybdopterin (Mo-MPT) cofactor (Moco or molybdenum cofactor) to form Mo-molybdopterin guanine dinucleotide (Mo-MGD) cofactor. The chain is Molybdenum cofactor guanylyltransferase from Mannheimia succiniciproducens (strain KCTC 0769BP / MBEL55E).